The primary structure comprises 201 residues: Large ribosomal subunit protein bL25 (201 aa).

It belongs to the bacterial ribosomal protein bL25 family. CTC subfamily. In terms of assembly, part of the 50S ribosomal subunit; part of the 5S rRNA/L5/L18/L25 subcomplex. Contacts the 5S rRNA. Binds to the 5S rRNA independently of L5 and L18.

In terms of biological role, this is one of the proteins that binds to the 5S RNA in the ribosome where it forms part of the central protuberance. This is Large ribosomal subunit protein bL25 from Burkholderia lata (strain ATCC 17760 / DSM 23089 / LMG 22485 / NCIMB 9086 / R18194 / 383).